Here is a 495-residue protein sequence, read N- to C-terminus: EF-hand calcium-binding domain-containing protein 14 (495 aa).

2 disordered regions span residues 1–50 (MKKR…EEEE) and 381–404 (TNKPESNRPPETADEEQVESFTSK). Serine 17 is subject to Phosphoserine. Positions 18–31 (RRKKPKKGPSSHRL) are enriched in basic residues. The span at 37-50 (PDSDSESSSEEEEE) shows a compositional bias: acidic residues. 2 consecutive EF-hand domains span residues 434 to 463 (SSTEDLQDLFRKTGQDVDGKLTYQEIWTSL) and 464 to 495 (GSAMPEPESLRAFDSDGDGRYSFLELRVALGI). 5 residues coordinate Ca(2+): aspartate 477, aspartate 479, aspartate 481, arginine 483, and glutamate 488.

The chain is EF-hand calcium-binding domain-containing protein 14 (EFCAB14) from Homo sapiens (Human).